The sequence spans 94 residues: Large ribosomal subunit protein eL14 (94 aa).

This sequence belongs to the eukaryotic ribosomal protein eL14 family.

In Methanopyrus kandleri (strain AV19 / DSM 6324 / JCM 9639 / NBRC 100938), this protein is Large ribosomal subunit protein eL14.